Reading from the N-terminus, the 72-residue chain is Translation initiation factor IF-1 (72 aa).

The region spanning 1–72 (MAKEELLEFP…TKGRINYRFK (72 aa)) is the S1-like domain.

Belongs to the IF-1 family. In terms of assembly, component of the 30S ribosomal translation pre-initiation complex which assembles on the 30S ribosome in the order IF-2 and IF-3, IF-1 and N-formylmethionyl-tRNA(fMet); mRNA recruitment can occur at any time during PIC assembly.

The protein localises to the cytoplasm. One of the essential components for the initiation of protein synthesis. Stabilizes the binding of IF-2 and IF-3 on the 30S subunit to which N-formylmethionyl-tRNA(fMet) subsequently binds. Helps modulate mRNA selection, yielding the 30S pre-initiation complex (PIC). Upon addition of the 50S ribosomal subunit IF-1, IF-2 and IF-3 are released leaving the mature 70S translation initiation complex. This chain is Translation initiation factor IF-1, found in Dinoroseobacter shibae (strain DSM 16493 / NCIMB 14021 / DFL 12).